We begin with the raw amino-acid sequence, 460 residues long: RING finger protein DG17 (460 aa).

An RING-type zinc finger spans residues 27 to 67; that stretch reads CPICFEFIYKKQIYQCKSGHHACKECWEKSLETKKECMTCK. 2 consecutive TRAF-type zinc fingers follow at residues 141–194 and 196–253; these read SHLI…KKEL and THYK…SELQ. Positions 269 to 294 form a coiled coil; sequence IEKLTNQVGQSKKTHDELLKKIEDLS. The region spanning 320-448 is the MATH domain; it reads GYRNKWIISN…DDKLIIEIYI (129 aa).

This sequence belongs to the TNF receptor-associated factor family. A subfamily.

The protein localises to the cytoplasm. In terms of biological role, probable adapter protein and signal transducer that links members of the tumor necrosis factor receptor family to different signaling pathways by association with the receptor cytoplasmic domain and kinases. This Dictyostelium discoideum (Social amoeba) protein is RING finger protein DG17 (zfaA).